The primary structure comprises 526 residues: Amino acid transporter AVT1E (526 aa).

A disordered region spans residues 1-49; the sequence is MKQNETFDQEREDLYHTFDEEDEESQTESSVPSTPLSRNRSEDVPVPWP. A compositionally biased stretch (basic and acidic residues) spans 8–18; sequence DQEREDLYHTF. Transmembrane regions (helical) follow at residues 140–160, 165–185, 212–232, 253–273, 278–298, 320–340, 353–373, 397–417, 436–456, 458–478, and 494–514; these read SVLN…PYAV, WLGL…GILL, ILVS…YIIM, LDST…TVWL, LLSY…LCLF, IPVA…FPNI, VLLI…VCGF, IAVW…ITPV, GVSM…ALTV, FFAT…ALIF, and FQIG…CCGT.

Belongs to the amino acid/polyamine transporter 2 family. Amino acid/auxin permease (AAAP) (TC 2.A.18.5) subfamily.

Its subcellular location is the membrane. This chain is Amino acid transporter AVT1E, found in Arabidopsis thaliana (Mouse-ear cress).